The following is a 150-amino-acid chain: UPF0756 membrane protein STH2648 (150 aa).

4 helical membrane-spanning segments follow: residues 13–33, 52–72, 85–105, and 111–131; these read ALGV…VLIL, AGLI…EVGW, LAAI…VTLL, and VIVG…GIPV.

Belongs to the UPF0756 family.

The protein resides in the cell membrane. This Symbiobacterium thermophilum (strain DSM 24528 / JCM 14929 / IAM 14863 / T) protein is UPF0756 membrane protein STH2648.